Here is a 74-residue protein sequence, read N- to C-terminus: Protein krueppel (74 aa).

4 C2H2-type zinc fingers span residues 1-4, 10-32, 38-60, and 66-74; these read ERTH, FECQ…MRLH, YRCE…LRVH, and YGCEHCSMK.

It belongs to the krueppel C2H2-type zinc-finger protein family.

It is found in the nucleus. Krueppel is a gap class segmentation protein. The polypeptide is Protein krueppel (Kr) (Tribolium castaneum (Red flour beetle)).